A 308-amino-acid chain; its full sequence is Cytochrome c biogenesis protein CcsA (308 aa).

The next 7 membrane-spanning stretches (helical) occupy residues 2–22, 44–64, 71–91, 143–163, 212–232, 247–267, and 273–293; these read IVSTLEHILTHISLSIVSILI, GMLITFLCITGLLANNWIYLG, LSESLIFLSWSFALIHSIGYF, MILGYAALLCGSLLSVALMVI, VISLGFIFLTIGILSGAVWAN, WAFITWIVFAIYLHTRININL, and AIVASLGFIIIWICYFGVNLV.

Belongs to the CcmF/CycK/Ccl1/NrfE/CcsA family. In terms of assembly, may interact with Ccs1.

Its subcellular location is the plastid membrane. In terms of biological role, required during biogenesis of c-type cytochromes (cytochrome c6 and cytochrome f) at the step of heme attachment. This is Cytochrome c biogenesis protein CcsA from Cuscuta reflexa (Southern Asian dodder).